A 483-amino-acid polypeptide reads, in one-letter code: Malonate-semialdehyde dehydrogenase 2 (483 aa).

NAD(+) contacts are provided by Phe152, Lys176, Glu179, Arg180, and Ser229. Cys284 acts as the Nucleophile in catalysis. Residue Glu384 participates in NAD(+) binding.

Belongs to the aldehyde dehydrogenase family. IolA subfamily. Homotetramer.

The catalysed reaction is 3-oxopropanoate + NAD(+) + CoA + H2O = hydrogencarbonate + acetyl-CoA + NADH + H(+). The enzyme catalyses 2-methyl-3-oxopropanoate + NAD(+) + CoA + H2O = propanoyl-CoA + hydrogencarbonate + NADH + H(+). Its pathway is polyol metabolism; myo-inositol degradation into acetyl-CoA; acetyl-CoA from myo-inositol: step 7/7. In terms of biological role, catalyzes the oxidation of malonate semialdehyde (MSA) and methylmalonate semialdehyde (MMSA) into acetyl-CoA and propanoyl-CoA, respectively. Is involved in a myo-inositol catabolic pathway. Bicarbonate, and not CO2, is the end-product of the enzymatic reaction. The protein is Malonate-semialdehyde dehydrogenase 2 of Geobacillus thermodenitrificans (strain NG80-2).